We begin with the raw amino-acid sequence, 344 residues long: Glycerol-3-phosphate dehydrogenase [NAD(P)+] (344 aa).

The NADPH site is built by Trp-11, Arg-31, Arg-32, and Lys-105. Residues Lys-105, Gly-133, and Ser-135 each contribute to the sn-glycerol 3-phosphate site. Ala-137 serves as a coordination point for NADPH. Sn-glycerol 3-phosphate-binding residues include Lys-188, Asp-241, Ser-251, Arg-252, and Asn-253. The Proton acceptor role is filled by Lys-188. Arg-252 serves as a coordination point for NADPH. Glu-278 contacts NADPH.

It belongs to the NAD-dependent glycerol-3-phosphate dehydrogenase family.

It is found in the cytoplasm. The enzyme catalyses sn-glycerol 3-phosphate + NAD(+) = dihydroxyacetone phosphate + NADH + H(+). The catalysed reaction is sn-glycerol 3-phosphate + NADP(+) = dihydroxyacetone phosphate + NADPH + H(+). The protein operates within membrane lipid metabolism; glycerophospholipid metabolism. In terms of biological role, catalyzes the reduction of the glycolytic intermediate dihydroxyacetone phosphate (DHAP) to sn-glycerol 3-phosphate (G3P), the key precursor for phospholipid synthesis. The polypeptide is Glycerol-3-phosphate dehydrogenase [NAD(P)+] (Acidithiobacillus ferrooxidans (strain ATCC 23270 / DSM 14882 / CIP 104768 / NCIMB 8455) (Ferrobacillus ferrooxidans (strain ATCC 23270))).